The sequence spans 361 residues: MAGNSIGQLFRVTTFGESHGLALGCIVDGVPPGIELTEADLQHDLDRRRPGTSRYTTQRREPDQVKILSGVFEGRTTGTSIGLLIENTDQRSQDYGAIKDVFRPGHADYTYEQKFGFRDYRGGGRSSARETAMRVAAGAIAKKYLAQKFGIVIRGCLTQMGDIPLAIKDWDLVEQNPFFCADADKIDALDELMRALKKEGDSIGAKVTVIADGVPPGLGEPVFDRLDADIAHAMMSINAVKGVEIGDGFEVVALRGSQNRDEITAQGFQSNHAGGILGGISSGQQIVANIALKPTSSITVPGHTINRAGEEVEMITKGRHDPCVGIRAVPIAEAMLAIVLMDHFLRQRAQNADVIPPLPRW.

2 residues coordinate NADP(+): R48 and R54. Residues 125–127 (RSS), 238–239 (NA), G278, 293–297 (KPTSS), and R319 contribute to the FMN site.

This sequence belongs to the chorismate synthase family. As to quaternary structure, homotetramer. It depends on FMNH2 as a cofactor.

The catalysed reaction is 5-O-(1-carboxyvinyl)-3-phosphoshikimate = chorismate + phosphate. It functions in the pathway metabolic intermediate biosynthesis; chorismate biosynthesis; chorismate from D-erythrose 4-phosphate and phosphoenolpyruvate: step 7/7. In terms of biological role, catalyzes the anti-1,4-elimination of the C-3 phosphate and the C-6 proR hydrogen from 5-enolpyruvylshikimate-3-phosphate (EPSP) to yield chorismate, which is the branch point compound that serves as the starting substrate for the three terminal pathways of aromatic amino acid biosynthesis. This reaction introduces a second double bond into the aromatic ring system. The polypeptide is Chorismate synthase (Enterobacter sp. (strain 638)).